A 160-amino-acid polypeptide reads, in one-letter code: CXXC motif containing zinc binding protein (160 aa).

Positions 33, 36, 67, and 70 each coordinate Zn(2+). Phosphoserine is present on Ser75.

It belongs to the UPF0587 family. Monomer.

The protein is CXXC motif containing zinc binding protein (CZIB) of Bos taurus (Bovine).